A 550-amino-acid chain; its full sequence is MESSRILITSALPYANGPLHFGHITGAYLPADVYARFQRLQGKEVLYICGSDEYGIAITLNAELAGMGYQEYVDMYHKLHKDTFKKLGISVDFFSRTTNAYHPAIVQDFYRNLQERGLVENQVTEQLYSEEEGKFLADRYVVGTCPKCGFDRARGDECQQCGADYEARDLKEPRSKLTGAALSLRDTEHAYLHLERMKEDLLAFVQGIYLRPHMRNFVTDYIEHLRPRAVTRDLSWGIPVPDLENKVFYVWFDAPIGYISGTMDWAASIGDPEAWKKFWLDDTVTYAQFIGKDNTSFHAVIFPAMEIGQSLPYKKVDALVTSEFLLLEGFQFSKSDGNFIDMDAFLETYSLDKLRYVLAAIAPETSDSEFSFQEFKTRCNSELVGKYGNFVNRVLAFAVKNGCTELSSPQLEQKDLDFISKSQKLAKDAAEHYAQYSLRKACSTIMELAALGNGYFNDEAPWKLAKEGNWNRVRAILFCACYCQKLLALISYPIMPETALKILEMIAPYSLDLGSQDPDRLHSLWTDSFFDYSEEKFSLKEPELLFTMVE.

Positions 13 to 23 match the 'HIGH' region motif; sequence PYANGPLHFGH. Residues Cys-145, Cys-148, Cys-158, and Cys-161 each contribute to the Zn(2+) site. Residues 331–335 carry the 'KMSKS' region motif; it reads QFSKS. Lys-334 lines the ATP pocket.

This sequence belongs to the class-I aminoacyl-tRNA synthetase family. MetG type 1 subfamily. In terms of assembly, monomer. The cofactor is Zn(2+).

It localises to the cytoplasm. The enzyme catalyses tRNA(Met) + L-methionine + ATP = L-methionyl-tRNA(Met) + AMP + diphosphate. Is required not only for elongation of protein synthesis but also for the initiation of all mRNA translation through initiator tRNA(fMet) aminoacylation. The protein is Methionine--tRNA ligase of Chlamydia trachomatis serovar L2b (strain UCH-1/proctitis).